Here is a 560-residue protein sequence, read N- to C-terminus: 2-succinyl-5-enolpyruvyl-6-hydroxy-3-cyclohexene-1-carboxylate synthase (560 aa).

The protein belongs to the TPP enzyme family. MenD subfamily. As to quaternary structure, homodimer. Requires Mg(2+) as cofactor. It depends on Mn(2+) as a cofactor. The cofactor is thiamine diphosphate.

It catalyses the reaction isochorismate + 2-oxoglutarate + H(+) = 5-enolpyruvoyl-6-hydroxy-2-succinyl-cyclohex-3-ene-1-carboxylate + CO2. It functions in the pathway quinol/quinone metabolism; 1,4-dihydroxy-2-naphthoate biosynthesis; 1,4-dihydroxy-2-naphthoate from chorismate: step 2/7. The protein operates within quinol/quinone metabolism; menaquinone biosynthesis. Its function is as follows. Catalyzes the thiamine diphosphate-dependent decarboxylation of 2-oxoglutarate and the subsequent addition of the resulting succinic semialdehyde-thiamine pyrophosphate anion to isochorismate to yield 2-succinyl-5-enolpyruvyl-6-hydroxy-3-cyclohexene-1-carboxylate (SEPHCHC). This Pectobacterium carotovorum subsp. carotovorum (strain PC1) protein is 2-succinyl-5-enolpyruvyl-6-hydroxy-3-cyclohexene-1-carboxylate synthase.